The sequence spans 675 residues: Protein PALS1 (675 aa).

2 disordered regions span residues 1 to 34 (MTTS…KHRE) and 51 to 78 (RRSA…KKQE). The tract at residues 1–345 (MTTSHMNGHV…QQIKPPPAKE (345 aa)) is required for the correct localization of PALS1 and PATJ at cell-cell contacts and the normal formation of tight junctions and adherens junctions. Composition is skewed to basic and acidic residues over residues 10 to 34 (VTEE…KHRE) and 54 to 78 (AQLE…KKQE). 2 positions are modified to phosphoserine: Ser-14 and Ser-25. Residues 21-140 (VDLASPEEHQ…LKHIQHTLVD (120 aa)) form an interaction with PARD6B region. Residues Ser-83 and Ser-84 each carry the phosphoserine modification. L27 domains lie at 120 to 177 (KILE…NKAS) and 179 to 235 (PFPL…MQLE). An interaction with LIN7C region spans residues 181–243 (PLISNAQDLA…LEPITDERVY (63 aa)). Residues 256–336 (IVRIEKARDI…TLTFVLIPSQ (81 aa)) form the PDZ domain. Positions 345–417 (ETVIHVKAHF…PGKSFQQQRE (73 aa)) constitute an SH3 domain. Positions 479–660 (KRPIILIGPQ…AYQELLRLIN (182 aa)) constitute a Guanylate kinase-like domain. 486–493 (GPQNCGQN) is a binding site for ATP.

The protein belongs to the MAGUK family. In terms of assembly, heterodimer with MPP1. Forms a heterotrimeric complex composed of PALS1, LIN7B and PATJ; the N-terminal L27 domain of PALS1 interacts with the L27 domain of PATJ and the C-terminal L27 domain of PALS1 interacts with the L27 domain of LIN7B. Component of a complex composed of PALS1, CRB1 and MPP4. Component of a complex whose core is composed of ARHGAP17, AMOT, PALS1, PATJ and PARD3/PAR3. Component of a complex composed of PALS1, CRB1 and EPB41L5. Within the complex, interacts (via HOOK domain) with EPB41L5 (via FERM domain), and interacts with CRB1 (via intracellular domain). Component of a complex composed of PALS1, MPP3 and CRB1; PALS1 acts as a bridging protein between MPP3 (via guanylate kinase-like domain) and CRB1. Component of a complex composed of CRB3, PALS1 and PATJ. As part of the Crumbs complex; interacts with WWP1, the interaction is enhanced by AMOTL2 and facilitates WWP1 localization to the plasma membrane. The Crumbs complex promotes monoubiquitination of AMOTL2 by WWP1, which activates the Hippo signaling pathway. Interacts (via PDZ domain) with PATJ (via N-terminus). Interacts with EZR. Interacts (via PDZ domain) with CRB1 (via C-terminal ERLI motif). While the PDZ domain is sufficient for interaction with CRB1, the adjacent SH3 and guanylate kinase-like domains are likely to contribute to a high affinity interaction. Interacts with WWTR1/TAZ (via WW domain). Interacts with MPP7. Interacts (via PDZ domain) with CRB3 (via C-terminus). Interacts with LIN7C. Interacts with MPDZ. Interacts with PARD6B. Interacts with SC6A1. Interacts with CDH5; the interaction promotes PALS1 localization to cell junctions and is required for CDH5-mediated vascular lumen formation and endothelial cell. Interacts with NPHP1 (via coiled coil and SH3 domains). Interacts with NPHP4. Interacts with CRB2. As to quaternary structure, (Microbial infection) Interacts (via PDZ domain) with human coronaviruses SARS-CoV and, probably, SARS-CoV-2 envelope small membrane protein E (via C-terminus); this inhibits the interaction between PALS1 and CRB3. As to expression, expressed at the outer limiting membrane in the retina (at protein level). Expressed in T lymphocytes (at protein level). Expressed in the kidney (at protein level).

Its subcellular location is the golgi apparatus. It is found in the cell membrane. It localises to the endomembrane system. The protein localises to the cell junction. The protein resides in the tight junction. Its subcellular location is the adherens junction. It is found in the cell projection. It localises to the axon. The protein localises to the perikaryon. The protein resides in the apical cell membrane. Its subcellular location is the endoplasmic reticulum-Golgi intermediate compartment. In terms of biological role, plays a role in tight junction biogenesis and in the establishment of cell polarity in epithelial cells. Also involved in adherens junction biogenesis by ensuring correct localization of the exocyst complex protein EXOC4/SEC8 which allows trafficking of adherens junction structural component CDH1 to the cell surface. Plays a role through its interaction with CDH5 in vascular lumen formation and endothelial membrane polarity. Required during embryonic and postnatal retinal development. Required for the maintenance of cerebellar progenitor cells in an undifferentiated proliferative state, preventing premature differentiation, and is required for cerebellar histogenesis, fissure formation, cerebellar layer organization and cortical development. Plays a role in neuronal progenitor cell survival, potentially via promotion of mTOR signaling. Plays a role in the radial and longitudinal extension of the myelin sheath in Schwann cells. May modulate SC6A1/GAT1-mediated GABA uptake by stabilizing the transporter. Plays a role in the T-cell receptor-mediated activation of NF-kappa-B. Required for localization of EZR to the apical membrane of parietal cells and may play a role in the dynamic remodeling of the apical cytoskeleton. Required for the normal polarized localization of the vesicular marker STX4. Required for the correct trafficking of the myelin proteins PMP22 and MAG. Involved in promoting phosphorylation and cytoplasmic retention of transcriptional coactivators YAP1 and WWTR1/TAZ which leads to suppression of TGFB1-dependent transcription of target genes such as CCN2/CTGF, SERPINE1/PAI1, SNAI1/SNAIL1 and SMAD7. Functionally, (Microbial infection) Acts as an interaction partner for human coronaviruses SARS-CoV and, probably, SARS-CoV-2 envelope protein E which results in delayed formation of tight junctions and disregulation of cell polarity. The sequence is that of Protein PALS1 from Homo sapiens (Human).